The chain runs to 1648 residues: eIF-2-alpha kinase GCN2 (1648 aa).

The tract at residues 1–26 (MAGGRGASGRGRAEPQESYSQRQDHE) is disordered. The RWD domain maps to 25–137 (HELQALEAIY…HHVQSFLSEH (113 aa)). Residues 146-205 (HEEMLERQAQEKQQRLLEARRKEEQEQREILHEIQRRKEEIKEEKKRKEMAKQERLEITS) adopt a coiled-coil conformation. Serine 230 is subject to Phosphoserine. Protein kinase domains follow at residues 286–538 (VGSD…HSFI) and 589–1000 (FEEL…SELL). ATP-binding positions include 595-603 (LGKGAFGAV) and lysine 618. Positions 661-784 (PAVPGTPPPD…CNQKDGSHEI (124 aa)) are disordered. Threonine 666 is subject to Phosphothreonine. 2 stretches are compositionally biased toward polar residues: residues 673–686 (PQAQDSPATCGKTS) and 704–722 (LSSSVEWSTSAERSTSTRF). 2 stretches are compositionally biased toward acidic residues: residues 730–739 (SSDEEDEDER) and 753–763 (SDSDIIFDNED). A compositionally biased stretch (basic and acidic residues) spans 775–784 (CNQKDGSHEI). The active-site Proton acceptor is aspartate 846. Threonine 869 is modified (phosphothreonine). Phosphothreonine; by autocatalysis is present on residues threonine 898 and threonine 903. The tract at residues 1021–1492 (IDGKAYRTMM…DHVMQKLRTK (472 aa)) is histidyl-tRNA synthetase-like. Residue lysine 1258 is modified to N6-acetyllysine.

This sequence belongs to the protein kinase superfamily. Ser/Thr protein kinase family. GCN2 subfamily. As to quaternary structure, homodimer; homodimerization is important for kinase activation by uncharged tRNAs. Interacts with GCN1; this interaction stimulates EIF2AK4/GCN2 kinase activity and is impaired by IMPACT upon a variety of stress conditions, such as amino acid depletion, UV-C irradiation, proteasome inhibitor treatment and glucose deprivation. Interacts with DNAJC3; this interaction inhibits EIF2AK4/GCN2 kinase activity during endoplasmic reticulum (ER), hypothermic and amino acid-starving stress conditions. Interacts with MAP3K20; activates EIF2AK4/GCN2 kinase activity in response to moderate ribotoxic stress. In terms of processing, autophosphorylated; autophosphorylation on Thr-898 is increased upon amino acid starvation and in UV irradiation cells and inhibited in presence of IMPACT. As to expression, expressed in liver. Expressed predominantly in the hippocampal CA1 region and the dentate gyrus, and to a lesser degree in CA3 (at protein level). Expressed in liver, lung, brain, kidney, skeletal muscle and testis. Expressed weakly in heart and spleen. Expressed in the hippocampal CA1 and CA3 regions, the dentate gyrus and cerebellum. Isoform 1 is widely expressed. Isoform 1 is expressed in brain, liver, skeletal muscle and testis. Isoform 3 is expressed in lung, brain, testis, prostate and choroid plexus. Isoform 4 is expressed in muscle, lung, kidney, brain, testis and prostate.

The protein resides in the cytoplasm. The catalysed reaction is L-seryl-[protein] + ATP = O-phospho-L-seryl-[protein] + ADP + H(+). It catalyses the reaction L-threonyl-[protein] + ATP = O-phospho-L-threonyl-[protein] + ADP + H(+). Its activity is regulated as follows. (Microbial infection) Kinase activity is enhanced by alphavirus genomic RNA sequences. Kinase activity is stimulated upon binding to uncharged tRNAs. Activated by serum starvation (in vitro). Its function is as follows. Metabolic-stress sensing protein kinase that phosphorylates the alpha subunit of eukaryotic translation initiation factor 2 (EIF2S1/eIF-2-alpha) in response to low amino acid availability. Plays a role as an activator of the integrated stress response (ISR) required for adaptation to amino acid starvation. EIF2S1/eIF-2-alpha phosphorylation in response to stress converts EIF2S1/eIF-2-alpha into a global protein synthesis inhibitor, leading to a global attenuation of cap-dependent translation, and thus to a reduced overall utilization of amino acids, while concomitantly initiating the preferential translation of ISR-specific mRNAs, such as the transcriptional activator ATF4, and hence allowing ATF4-mediated reprogramming of amino acid biosynthetic gene expression to alleviate nutrient depletion. Required for the translational induction of protein kinase PRKCH following amino acid starvation. Binds uncharged tRNAs. Involved in cell cycle arrest by promoting cyclin D1 mRNA translation repression after the unfolded protein response pathway (UPR) activation or cell cycle inhibitor CDKN1A/p21 mRNA translation activation in response to amino acid deprivation. Plays a role in the consolidation of synaptic plasticity, learning as well as formation of long-term memory. Plays a role in neurite outgrowth inhibition. Plays a role in feeding behavior to maintain amino acid homeostasis; contributes to the innate aversion toward diets of imbalanced amino acid composition. Plays a proapoptotic role in response to glucose deprivation. Promotes global cellular protein synthesis repression in response to UV irradiation independently of the stress-activated protein kinase/c-Jun N-terminal kinase (SAPK/JNK) and p38 MAPK signaling pathways. Functionally, (Microbial infection) Plays a role in the antiviral response against alphavirus infection; impairs early viral mRNA translation of the incoming genomic virus RNA, thus preventing alphavirus replication. In terms of biological role, (Microbial infection) Plays a role in modulating the adaptive immune response to Yellow fever virus infection; promotes dendritic cells to initiate autophagy and antigene presentation to both CD4(+) and CD8(+) T-cells under amino acid starvation. The protein is eIF-2-alpha kinase GCN2 of Mus musculus (Mouse).